Reading from the N-terminus, the 170-residue chain is MLIYNDILNGDELISDSYDLKEVDGIVYEADCAMIEEGAVEVNIGANASAEEAAEDLDDGAVKVNNIVNSFRLQSTTFDKKSYLAYLKGYMKAIKAKLQENGSSAEDIKAFETGASKFVKDTIVPKFKDFEFYTGESMDPDGMVVLLNYREDGVTPYTIFWKHGLKETKV.

The region spanning 1–170 (MLIYNDILNG…WKHGLKETKV (170 aa)) is the TCTP domain.

This sequence belongs to the TCTP family.

The protein resides in the cytoplasm. It localises to the cytoskeleton. Functionally, involved in protein synthesis. Involved in microtubule stabilization. This Gibberella zeae (strain ATCC MYA-4620 / CBS 123657 / FGSC 9075 / NRRL 31084 / PH-1) (Wheat head blight fungus) protein is Translationally-controlled tumor protein homolog.